The primary structure comprises 132 residues: Agouti-related protein (132 aa).

A signal peptide spans 1–20 (MLTAAVLSCALLLALPATRG). The propeptide occupies 21–82 (AQMGLAPMEG…VLDLQDREPR (62 aa)). 5 cysteine pairs are disulfide-bonded: C87–C102, C94–C108, C101–C119, C105–C129, and C110–C117. The 43-residue stretch at 87–129 (CVRLHESCLGQQVPCCDPCATCYCRFFNAFCYCRKLGTAMNPC) folds into the Agouti domain. An interaction with melanocortin receptors region spans residues 111–113 (RFF).

As to quaternary structure, interacts with melanocortin receptors MC3R, MC4R and MC5R. Expressed primarily in the adrenal gland, subthalamic nucleus, and hypothalamus, with a lower level of expression occurring in testis, lung, and kidney.

The protein resides in the secreted. The protein localises to the golgi apparatus lumen. In terms of biological role, plays a role in weight homeostasis. Involved in the control of feeding behavior through the central melanocortin system. Acts as alpha melanocyte-stimulating hormone antagonist by inhibiting cAMP production mediated by stimulation of melanocortin receptors within the hypothalamus and adrenal gland. Has very low activity with MC5R. Is an inverse agonist for MC3R and MC4R being able to suppress their constitutive activity. It promotes MC3R and MC4R endocytosis in an arrestin-dependent manner. The protein is Agouti-related protein (AGRP) of Homo sapiens (Human).